Consider the following 364-residue polypeptide: Methylthioribose-1-phosphate isomerase (364 aa).

Asp246 (proton donor) is an active-site residue.

It belongs to the eIF-2B alpha/beta/delta subunits family. MtnA subfamily.

The protein resides in the cytoplasm. Its subcellular location is the nucleus. The enzyme catalyses 5-(methylsulfanyl)-alpha-D-ribose 1-phosphate = 5-(methylsulfanyl)-D-ribulose 1-phosphate. The protein operates within amino-acid biosynthesis; L-methionine biosynthesis via salvage pathway; L-methionine from S-methyl-5-thio-alpha-D-ribose 1-phosphate: step 1/6. Functionally, catalyzes the interconversion of methylthioribose-1-phosphate (MTR-1-P) into methylthioribulose-1-phosphate (MTRu-1-P). In Bombyx mori (Silk moth), this protein is Methylthioribose-1-phosphate isomerase.